The primary structure comprises 891 residues: von Willebrand factor A domain-containing protein 7 (891 aa).

Residues 1–28 form the signal peptide; that stretch reads MLPVEVPLSHLGPPILLLLQLLLPPTSA. An N-linked (GlcNAc...) asparagine glycan is attached at asparagine 55. The segment at 238–273 is disordered; the sequence is PKPPGKCSHGGHFDQSSSQPPRGGINKDSTSPSFSP. Positions 314-499 constitute a VWFA domain; the sequence is ASSLSFVLDT…DVAAIVGESM (186 aa).

In terms of tissue distribution, expressed at low level in many tissues.

The protein localises to the secreted. This chain is von Willebrand factor A domain-containing protein 7 (Vwa7), found in Mus musculus (Mouse).